We begin with the raw amino-acid sequence, 563 residues long: Urocanate hydratase (563 aa).

NAD(+)-binding positions include 53-54 (GG), Gln131, 177-179 (GMG), Glu197, Arg202, 243-244 (NA), 264-268 (QTSAH), 274-275 (YL), and Tyr323. The active site involves Cys411. Residue Gly493 participates in NAD(+) binding.

Belongs to the urocanase family. Requires NAD(+) as cofactor.

It is found in the cytoplasm. It catalyses the reaction 4-imidazolone-5-propanoate = trans-urocanate + H2O. It functions in the pathway amino-acid degradation; L-histidine degradation into L-glutamate; N-formimidoyl-L-glutamate from L-histidine: step 2/3. Its function is as follows. Catalyzes the conversion of urocanate to 4-imidazolone-5-propionate. The polypeptide is Urocanate hydratase (Yersinia enterocolitica serotype O:8 / biotype 1B (strain NCTC 13174 / 8081)).